A 264-amino-acid polypeptide reads, in one-letter code: Ribosomal RNA small subunit methyltransferase A (264 aa).

S-adenosyl-L-methionine is bound by residues N12, L14, G39, E60, D83, and N103.

Belongs to the class I-like SAM-binding methyltransferase superfamily. rRNA adenine N(6)-methyltransferase family. RsmA subfamily.

It is found in the cytoplasm. The catalysed reaction is adenosine(1518)/adenosine(1519) in 16S rRNA + 4 S-adenosyl-L-methionine = N(6)-dimethyladenosine(1518)/N(6)-dimethyladenosine(1519) in 16S rRNA + 4 S-adenosyl-L-homocysteine + 4 H(+). Functionally, specifically dimethylates two adjacent adenosines (A1518 and A1519) in the loop of a conserved hairpin near the 3'-end of 16S rRNA in the 30S particle. May play a critical role in biogenesis of 30S subunits. This chain is Ribosomal RNA small subunit methyltransferase A, found in Syntrophotalea carbinolica (strain DSM 2380 / NBRC 103641 / GraBd1) (Pelobacter carbinolicus).